Here is a 354-residue protein sequence, read N- to C-terminus: Fructose-bisphosphate aldolase (354 aa).

Serine 50 is a binding site for D-glyceraldehyde 3-phosphate. Aspartate 83 acts as the Proton donor in catalysis. Histidine 84, aspartate 105, glutamate 142, and histidine 198 together coordinate Zn(2+). Glycine 199 contributes to the dihydroxyacetone phosphate binding site. A Zn(2+)-binding site is contributed by histidine 232. Dihydroxyacetone phosphate-binding positions include 233–235 and 275–278; these read GSS and NIDT.

Belongs to the class II fructose-bisphosphate aldolase family. As to quaternary structure, homodimer. Requires Zn(2+) as cofactor.

It catalyses the reaction beta-D-fructose 1,6-bisphosphate = D-glyceraldehyde 3-phosphate + dihydroxyacetone phosphate. Its pathway is carbohydrate biosynthesis; Calvin cycle. It functions in the pathway carbohydrate degradation; glycolysis; D-glyceraldehyde 3-phosphate and glycerone phosphate from D-glucose: step 4/4. With respect to regulation, activity is stimulated by Fe(2+) in autotrophically grown cells. Catalyzes the aldol condensation of dihydroxyacetone phosphate (DHAP or glycerone-phosphate) with glyceraldehyde 3-phosphate (G3P) to form fructose 1,6-bisphosphate (FBP) in gluconeogenesis and the reverse reaction in glycolysis. The polypeptide is Fructose-bisphosphate aldolase (Xanthobacter flavus).